A 506-amino-acid polypeptide reads, in one-letter code: Methylthioalkylmalate synthase 1, chloroplastic (506 aa).

The N-terminal 49 residues, 1-49 (MASSLLTSSVMIPTTGSTVVGRSVLPFQSSLHSLRLTHSYKNPALFISC), are a transit peptide targeting the chloroplast. Positions 85 to 359 (VRVFDTTLRD…YTKIDTRQIM (275 aa)) constitute a Pyruvate carboxyltransferase domain. Position 98 is a phosphoserine (S98).

It belongs to the alpha-IPM synthase/homocitrate synthase family. As to quaternary structure, monomer. Mn(2+) is required as a cofactor. As to expression, highly expressed in leaves, flowers, roots and siliques. Not detected in flowers in PubMed:12432038.

It is found in the plastid. It localises to the chloroplast. The enzyme catalyses an omega-(methylsulfanyl)-2-oxoalkanoate + acetyl-CoA + H2O = a 2-(omega-methylsulfanyl)alkylmalate + CoA + H(+). 1 mM DTT required for activity. Activated by ATP and inhibited by iodoacetamide. Determines the side chain length of aliphatic glucosinolate structures. Catalyzes exclusively the condensation reactions of both the first and second methionine carbon chain elongation. The chain is Methylthioalkylmalate synthase 1, chloroplastic (MAM1) from Arabidopsis thaliana (Mouse-ear cress).